The sequence spans 134 residues: Translation initiation factor 2 subunit beta (134 aa).

Belongs to the eIF-2-beta/eIF-5 family. In terms of assembly, heterotrimer composed of an alpha, a beta and a gamma chain.

Its function is as follows. eIF-2 functions in the early steps of protein synthesis by forming a ternary complex with GTP and initiator tRNA. The protein is Translation initiation factor 2 subunit beta of Pyrobaculum arsenaticum (strain DSM 13514 / JCM 11321 / PZ6).